Here is a 439-residue protein sequence, read N- to C-terminus: MTKFPRWLAMLVGLLFPLSALTQQQGLTIDIVGGNTAATPIAVLPMPYHDSAGAPATDVSGVVAADLNRSGQFRTLPLGQITERPTHGSEIRFPTWQALKQDYIVVGRVLDARQGTYRVEYELFDVRNGKRMLGLAMTARASAMRDVAHQMADAIYEKITGLRGAFFTRIAYVTASGSHGAMRYALMVADSDGYNPQTIVRSAEPLLSPDWSSDGKKLAYVSFEKGGSSIYIQDIATGSRELVSSFRGINAAPSFAPDGHRIALSLSRSGNPEIYVMDLVSKQLIQLTNSFGIDTEPVWSSDGKFIYFTSDRGGRPQIYKVASVGGAATRVTFQGNYNASASVSYDDKKIVVAQGSGNVYRIAMMDQSSGSTVWNTLSTGSLDESPSFAPNASMVLYAAREGGRGVLYAVSADARVRQRLVSVDSDVREPAWGPYRSVH.

An N-terminal signal peptide occupies residues 1 to 22; that stretch reads MTKFPRWLAMLVGLLFPLSALT.

The protein belongs to the TolB family. In terms of assembly, the Tol-Pal system is composed of five core proteins: the inner membrane proteins TolA, TolQ and TolR, the periplasmic protein TolB and the outer membrane protein Pal. They form a network linking the inner and outer membranes and the peptidoglycan layer.

It localises to the periplasm. Part of the Tol-Pal system, which plays a role in outer membrane invagination during cell division and is important for maintaining outer membrane integrity. The polypeptide is Tol-Pal system protein TolB (Xylella fastidiosa (strain Temecula1 / ATCC 700964)).